The sequence spans 269 residues: tRNA pseudouridine synthase A (269 aa).

The Nucleophile role is filled by D51. Y109 is a substrate binding site.

It belongs to the tRNA pseudouridine synthase TruA family. As to quaternary structure, homodimer.

It catalyses the reaction uridine(38/39/40) in tRNA = pseudouridine(38/39/40) in tRNA. Its function is as follows. Formation of pseudouridine at positions 38, 39 and 40 in the anticodon stem and loop of transfer RNAs. This chain is tRNA pseudouridine synthase A, found in Aeromonas hydrophila subsp. hydrophila (strain ATCC 7966 / DSM 30187 / BCRC 13018 / CCUG 14551 / JCM 1027 / KCTC 2358 / NCIMB 9240 / NCTC 8049).